A 212-amino-acid chain; its full sequence is Octanoyltransferase (212 aa).

The region spanning 33–212 (GTAPELVWLL…ATFPEVFGAD (180 aa)) is the BPL/LPL catalytic domain. Substrate is bound by residues 72–79 (RGGQYTYH), 144–146 (AIG), and 157–159 (GIA). Catalysis depends on Cys175, which acts as the Acyl-thioester intermediate.

This sequence belongs to the LipB family.

The protein resides in the cytoplasm. It carries out the reaction octanoyl-[ACP] + L-lysyl-[protein] = N(6)-octanoyl-L-lysyl-[protein] + holo-[ACP] + H(+). It participates in protein modification; protein lipoylation via endogenous pathway; protein N(6)-(lipoyl)lysine from octanoyl-[acyl-carrier-protein]: step 1/2. Its function is as follows. Catalyzes the transfer of endogenously produced octanoic acid from octanoyl-acyl-carrier-protein onto the lipoyl domains of lipoate-dependent enzymes. Lipoyl-ACP can also act as a substrate although octanoyl-ACP is likely to be the physiological substrate. The chain is Octanoyltransferase from Paramagnetospirillum magneticum (strain ATCC 700264 / AMB-1) (Magnetospirillum magneticum).